Here is a 330-residue protein sequence, read N- to C-terminus: Ribosomal RNA small subunit methyltransferase H (330 aa).

S-adenosyl-L-methionine contacts are provided by residues 35 to 37 (GGY), Asp-53, Phe-80, Asp-101, and Gln-108.

The protein belongs to the methyltransferase superfamily. RsmH family.

It is found in the cytoplasm. The enzyme catalyses cytidine(1402) in 16S rRNA + S-adenosyl-L-methionine = N(4)-methylcytidine(1402) in 16S rRNA + S-adenosyl-L-homocysteine + H(+). Specifically methylates the N4 position of cytidine in position 1402 (C1402) of 16S rRNA. This is Ribosomal RNA small subunit methyltransferase H from Rhodopseudomonas palustris (strain BisB18).